The primary structure comprises 691 residues: Elongation factor G (691 aa).

The tr-type G domain maps to 8–282 (ERVRNIGIAA…AVVDYLPAPI (275 aa)). GTP is bound by residues 17–24 (AHIDAGKT), 81–85 (DTPGH), and 135–138 (NKMD).

This sequence belongs to the TRAFAC class translation factor GTPase superfamily. Classic translation factor GTPase family. EF-G/EF-2 subfamily.

It localises to the cytoplasm. Its function is as follows. Catalyzes the GTP-dependent ribosomal translocation step during translation elongation. During this step, the ribosome changes from the pre-translocational (PRE) to the post-translocational (POST) state as the newly formed A-site-bound peptidyl-tRNA and P-site-bound deacylated tRNA move to the P and E sites, respectively. Catalyzes the coordinated movement of the two tRNA molecules, the mRNA and conformational changes in the ribosome. This is Elongation factor G from Synechococcus sp. (strain WH7803).